The chain runs to 56 residues: uncharacterized protein (56 aa).

The helical transmembrane segment at isoleucine 30–isoleucine 52 threads the bilayer.

The protein resides in the membrane. This is an uncharacterized protein from Dictyostelium discoideum (Social amoeba).